A 529-amino-acid chain; its full sequence is CTP synthase (529 aa).

The segment at 1–266 (MTKYIIVTGG…TKKIFNKLGL (266 aa)) is amidoligase domain. Ser13 serves as a coordination point for CTP. Residue Ser13 participates in UTP binding. 14–19 (SVGKGT) lines the ATP pocket. An L-glutamine-binding site is contributed by Tyr54. ATP is bound at residue Asp71. Residues Asp71 and Glu141 each coordinate Mg(2+). Residues 148 to 150 (DIE), 187 to 192 (KTKPLQ), and Lys223 each bind CTP. UTP contacts are provided by residues 187 to 192 (KTKPLQ) and Lys223. The region spanning 291–529 (KIALVGKYTK…FLNFLSVASA (239 aa)) is the Glutamine amidotransferase type-1 domain. Gly354 serves as a coordination point for L-glutamine. The Nucleophile; for glutamine hydrolysis role is filled by Cys381. L-glutamine contacts are provided by residues 382-385 (FGMQ), Glu405, and Arg462. Residues His506 and Glu508 contribute to the active site.

Belongs to the CTP synthase family. In terms of assembly, homotetramer.

It carries out the reaction UTP + L-glutamine + ATP + H2O = CTP + L-glutamate + ADP + phosphate + 2 H(+). It catalyses the reaction L-glutamine + H2O = L-glutamate + NH4(+). The catalysed reaction is UTP + NH4(+) + ATP = CTP + ADP + phosphate + 2 H(+). The protein operates within pyrimidine metabolism; CTP biosynthesis via de novo pathway; CTP from UDP: step 2/2. Its activity is regulated as follows. Allosterically activated by GTP, when glutamine is the substrate; GTP has no effect on the reaction when ammonia is the substrate. The allosteric effector GTP functions by stabilizing the protein conformation that binds the tetrahedral intermediate(s) formed during glutamine hydrolysis. Inhibited by the product CTP, via allosteric rather than competitive inhibition. Catalyzes the ATP-dependent amination of UTP to CTP with either L-glutamine or ammonia as the source of nitrogen. Regulates intracellular CTP levels through interactions with the four ribonucleotide triphosphates. In Sulfolobus acidocaldarius (strain ATCC 33909 / DSM 639 / JCM 8929 / NBRC 15157 / NCIMB 11770), this protein is CTP synthase.